The chain runs to 499 residues: Pentatricopeptide repeat-containing protein At5g61800 (499 aa).

10 PPR repeats span residues 78–113 (STFC…SVPP), 114–150 (DFHT…GLLS), 151–181 (DLFT…NPQR), 182–212 (DVVT…MPLR), 213–247 (DLVS…GLKP), 248–282 (DNVA…RLFI), 283–313 (DSFL…CSDK), 314–348 (TLFT…GIKP), 349–379 (DGVT…MRSL), and 385–419 (EMKH…GGNR). A type E motif region spans residues 424 to 499 (AWSGLLGGCR…KNVGFSKVLS (76 aa)).

This sequence belongs to the PPR family. PCMP-E subfamily.

The sequence is that of Pentatricopeptide repeat-containing protein At5g61800 (PCMP-E8) from Arabidopsis thaliana (Mouse-ear cress).